A 343-amino-acid chain; its full sequence is Glycogen biosynthesis protein GlgD (343 aa).

Belongs to the bacterial/plant glucose-1-phosphate adenylyltransferase family.

Its function is as follows. Required for the synthesis of glycogen. This chain is Glycogen biosynthesis protein GlgD (glgD), found in Bacillus subtilis (strain 168).